The following is a 780-amino-acid chain: WD repeat-containing protein 27 (780 aa).

13 WD repeats span residues 3–56 (TPPE…VWSS), 61–100 (HQLLTLQGHHQLITAVVFGNQIDPLLLCSASEDYIIMWNV), 111–150 (LTPRGTILGSLLQTVLCLRFSLDDRAIAVCAGNKISVMDV), 154–193 (SVLVELKGHQGSVTAVEFCPWQAHTLISVSEDRSFKVWDF), 200–236 (YSSSILTAYPLLNLLINEENQQLVTGSADGQLWIFSL), 291–335 (FPIL…LASF), 342–385 (HFKE…VLEI), 500–540 (NLSR…VFNA), 544–582 (GPPAAFSGHDGAVSTICWSHDKRWLLSTGRDRTLRVWSV), 588–639 (MLLL…RYKP), 644–685 (KPIF…VFDL), 691–738 (AAVL…LWDL), and 752–779 (AFCTVLQDTQIRLLKWPSTQQLLSLSQP).

The chain is WD repeat-containing protein 27 (Wdr27) from Mus musculus (Mouse).